The sequence spans 286 residues: MSKDNLHRYLFENADVRGELVQLEQSYQEVLSAHNYPAPIQNLLGQLLAATSLLTATLKFNGDISVQLQGDGPVSLAVINGNNLQQLRGVARFKGELSSDGDLQQLFGKGHMVITLTPTEGERYQGVVALDKPTLAGCLEEYFAQSEQLPTSITLFANGKQAAGMLLQVLPTEGDHNAEFEHLEQLTATVKAEELFELEAEEVLHRLYHQEEVRLFEPVAVTFSCTCSRERSASAIRTVSREEIESILAEQGKIEMGCEYCNTNYSFDSIDVAAIFSNTQAPETKQ.

2 disulfides stabilise this stretch: Cys225–Cys227 and Cys258–Cys261.

The protein belongs to the HSP33 family. In terms of processing, under oxidizing conditions two disulfide bonds are formed involving the reactive cysteines. Under reducing conditions zinc is bound to the reactive cysteines and the protein is inactive.

Its subcellular location is the cytoplasm. Redox regulated molecular chaperone. Protects both thermally unfolding and oxidatively damaged proteins from irreversible aggregation. Plays an important role in the bacterial defense system toward oxidative stress. The chain is 33 kDa chaperonin from Shewanella woodyi (strain ATCC 51908 / MS32).